The following is a 149-amino-acid chain: Transthyretin (149 aa).

An N-terminal signal peptide occupies residues 1-22 (MAFHSLLLLCLAGLAFVSETAA). Cysteine 32 bears the Sulfocysteine mark. Lysine 37 contacts L-thyroxine. Residue glutamate 64 is modified to 4-carboxyglutamate. Residues glutamate 76 and serine 139 each contribute to the L-thyroxine site.

The protein belongs to the transthyretin family. Homotetramer. Dimer of dimers. In the homotetramer, subunits assemble around a central channel that can accommodate two ligand molecules. Interacts with RBP4. Post-translationally, sulfonation of the reactive cysteine Cys-32 enhances the stability of the native conformation of TTR, avoiding misassembly of the protein leading to amyloid formation. In terms of tissue distribution, detected in liver.

Its subcellular location is the secreted. Thyroid hormone-binding protein. Probably transports thyroxine from the bloodstream to the brain. This Macropus giganteus (Eastern gray kangaroo) protein is Transthyretin (TTR).